A 307-amino-acid chain; its full sequence is Methionyl-tRNA formyltransferase (307 aa).

A (6S)-5,6,7,8-tetrahydrofolate-binding site is contributed by serine 109–proline 112.

Belongs to the Fmt family.

The catalysed reaction is L-methionyl-tRNA(fMet) + (6R)-10-formyltetrahydrofolate = N-formyl-L-methionyl-tRNA(fMet) + (6S)-5,6,7,8-tetrahydrofolate + H(+). In terms of biological role, attaches a formyl group to the free amino group of methionyl-tRNA(fMet). The formyl group appears to play a dual role in the initiator identity of N-formylmethionyl-tRNA by promoting its recognition by IF2 and preventing the misappropriation of this tRNA by the elongation apparatus. The polypeptide is Methionyl-tRNA formyltransferase (Orientia tsutsugamushi (strain Boryong) (Rickettsia tsutsugamushi)).